Consider the following 86-residue polypeptide: MSVKIRLKRMGAKKRPYYRVVVMNSTSPRDGRAIEELGYYHPVEKQNQIKIKEDRMKDWISKGAILSDTVKMLLNKNNLNAKSQEV.

The protein belongs to the bacterial ribosomal protein bS16 family.

In Borreliella burgdorferi (strain ATCC 35210 / DSM 4680 / CIP 102532 / B31) (Borrelia burgdorferi), this protein is Small ribosomal subunit protein bS16.